The following is a 902-amino-acid chain: MAAVGSMRSGSPAFGLGHLLTLAILALASDACKEVVLQVPSELPAEKFVGRVNLMDCLKSADIVHLSDPDFQVLEDGSVYTTSSVVLSSGQRSFTIWLFSTDSQEEREISVHLEGPVEVLNKRPHTEKVLSRAKRRWAPIPCSMLENSLGPFPLFLQQIQSDTAQNYTIYYSIRGPGVDKEPLNLFYVERDTGNLYCTGRVDREQYESFELTAFATTPDGYTPEYPLPLLIKIEDENDNYPIFTQKLYSFTVQENSRIGSIVGEVCATDLDEPDTMHTRLRYSILEQSPSPPMLFTMHPSTGVITTTSAQLDRELIDKYQLLIKVQDMDGQYFGLHTTAKCIITIEDVNDNLPTFTRTTYVTSVEENTVNVEILRLTVQDKDLVNSPNWRANYTILKGNENGNFKIVTDPKTNEGILCVIKPLDYEERQQVTLQIGVVNEAPYTREASSKSPMSTATVTVTVTNQDEGPECIPPMQTVRIQENVPVGTRNDGYKAYDPETRSSSGIRYRKLSDPRGWVTVNEDSGSITIFRALDREAETVRNGIYNITVLALDADGRSCTGTLGIILEDVNDNGPFIPKQTVVICKATMSSAEIVAVDLDDPVNGPPFDFSLESSDSEVQRMWRLTRINDTAARLSYQNDPSFGSYAVPIRVTDRLGLSSVTTLNVLVCDCITESDCTLRSGERTGYADVRLGPWAILAILLGIALLFCILFTLVCSVSRASKQQKILPDDLAQQNLIVSNTEAPGDDKVYSTNGLTTQTMGASGQTAFTTMGTGVKSGGQETIEMVKGGQQTLDSRRGAGYHHHTLDPCRGGHVEVDNYRHTYSEWYNFIQPRLGDKVQFCHTDDNQKLAQDYVLTYNYEGKGSAAGSVGCCSDLQEEDGLEFLDHLEPKFRTLAEVCAKR.

Residues 1-27 (MAAVGSMRSGSPAFGLGHLLTLAILAL) form the signal peptide. The propeptide occupies 28–135 (ASDACKEVVL…TEKVLSRAKR (108 aa)). Cadherin domains are found at residues 136–243 (RWAP…YPIF), 244–355 (TQKL…LPTF), 356–471 (TRTT…GPEC), 472–579 (IPPM…FIPK), and 580–694 (QTVV…RLGP). Residues 136 to 694 (RWAPIPCSML…TGYADVRLGP (559 aa)) lie on the Extracellular side of the membrane. N166 is a glycosylation site (N-linked (GlcNAc...) asparagine). Residues N392, N546, and N629 are each glycosylated (N-linked (GlcNAc...) asparagine). Residues 695–715 (WAILAILLGIALLFCILFTLV) traverse the membrane as a helical segment. The Cytoplasmic portion of the chain corresponds to 716 to 902 (CSVSRASKQQ…RTLAEVCAKR (187 aa)). 3 positions are modified to phosphoserine: S865, S869, and S874.

In terms of assembly, interacts with DSP, PKP2 and JUP. Interacts with DSG3; the interaction may limit the interaction of DSC3 with p38MAPK family members and therefore repress p38MAPK signaling activation. In terms of tissue distribution, expressed in intestinal epithelial cells (at protein level). Expressed in the heart. Expressed in tongue, bladder, stomach, liver, kidney, and lung.

The protein localises to the cell membrane. The protein resides in the cell junction. It localises to the desmosome. A component of desmosome cell-cell junctions which are required for positive regulation of cellular adhesion. Promotes timely incorporation of DSG2 into desmosome intercellular junctions and promotes interaction of desmosome cell junctions with intermediate filament cytokeratin, via modulation of DSP phosphorylation. Plays an important role in desmosome-mediated maintenance of intestinal epithelial cell intercellular adhesion strength and barrier function. Positively regulates wound healing of intestinal mucosa via promotion of epithelial cell migration, and also plays a role in mechanotransduction of force between intestinal epithelial cells and extracellular matrix. May contribute to epidermal cell positioning (stratification) by mediating differential adhesiveness between cells that express different isoforms. May promote p38MAPK signaling activation that facilitates keratinocyte migration. The polypeptide is Desmocollin-2 (Dsc2) (Mus musculus (Mouse)).